A 495-amino-acid polypeptide reads, in one-letter code: Lysine--tRNA ligase (495 aa).

Residues Glu406 and Glu413 each contribute to the Mg(2+) site.

This sequence belongs to the class-II aminoacyl-tRNA synthetase family. Homodimer. The cofactor is Mg(2+).

It localises to the cytoplasm. The enzyme catalyses tRNA(Lys) + L-lysine + ATP = L-lysyl-tRNA(Lys) + AMP + diphosphate. The chain is Lysine--tRNA ligase from Staphylococcus epidermidis (strain ATCC 35984 / DSM 28319 / BCRC 17069 / CCUG 31568 / BM 3577 / RP62A).